The following is a 620-amino-acid chain: Chaperone protein HscA homolog (620 aa).

This sequence belongs to the heat shock protein 70 family.

Chaperone involved in the maturation of iron-sulfur cluster-containing proteins. Has a low intrinsic ATPase activity which is markedly stimulated by HscB. The sequence is that of Chaperone protein HscA homolog from Janthinobacterium sp. (strain Marseille) (Minibacterium massiliensis).